Here is a 250-residue protein sequence, read N- to C-terminus: 3-deoxy-manno-octulosonate cytidylyltransferase (250 aa).

It belongs to the KdsB family.

Its subcellular location is the cytoplasm. It carries out the reaction 3-deoxy-alpha-D-manno-oct-2-ulosonate + CTP = CMP-3-deoxy-beta-D-manno-octulosonate + diphosphate. It functions in the pathway nucleotide-sugar biosynthesis; CMP-3-deoxy-D-manno-octulosonate biosynthesis; CMP-3-deoxy-D-manno-octulosonate from 3-deoxy-D-manno-octulosonate and CTP: step 1/1. The protein operates within bacterial outer membrane biogenesis; lipopolysaccharide biosynthesis. Functionally, activates KDO (a required 8-carbon sugar) for incorporation into bacterial lipopolysaccharide in Gram-negative bacteria. The polypeptide is 3-deoxy-manno-octulosonate cytidylyltransferase (Yersinia pseudotuberculosis serotype O:1b (strain IP 31758)).